A 240-amino-acid chain; its full sequence is Glutathione S-transferase theta-1 (240 aa).

In terms of domain architecture, GST N-terminal spans glycine 2–aspartate 82. Residues histidine 40, lysine 53–valine 54, and glutamate 66–serine 67 each bind glutathione. The region spanning aspartate 88–phenylalanine 220 is the GST C-terminal domain.

It belongs to the GST superfamily. Theta family. In terms of assembly, homodimer. As to expression, found in erythrocyte. Expressed at low levels in liver. In lung, expressed at low levels in club cells and ciliated cells at the alveolar/bronchiolar junction. Absent from epithelial cells of larger bronchioles.

It is found in the cytoplasm. The catalysed reaction is RX + glutathione = an S-substituted glutathione + a halide anion + H(+). Functionally, conjugation of reduced glutathione to a wide number of exogenous and endogenous hydrophobic electrophiles. Acts on 1,2-epoxy-3-(4-nitrophenoxy)propane, phenethylisothiocyanate 4-nitrobenzyl chloride and 4-nitrophenethyl bromide. Displays glutathione peroxidase activity with cumene hydroperoxide. This chain is Glutathione S-transferase theta-1 (GSTT1), found in Homo sapiens (Human).